A 107-amino-acid polypeptide reads, in one-letter code: ATP-dependent Clp protease adapter protein ClpS (107 aa).

A disordered region spans residues 1–20 (MAQKHEHDTSVITESAPKQK).

The protein belongs to the ClpS family. As to quaternary structure, binds to the N-terminal domain of the chaperone ClpA.

In terms of biological role, involved in the modulation of the specificity of the ClpAP-mediated ATP-dependent protein degradation. This is ATP-dependent Clp protease adapter protein ClpS from Myxococcus xanthus (strain DK1622).